Reading from the N-terminus, the 440-residue chain is Tetratricopeptide repeat protein 5 (440 aa).

5 TPR repeats span residues 7–61, 68–98, 103–130, 136–174, and 179–216; these read EEVK…EEVV, AQVL…AVKL, VEAW…SGAL, KVSL…AVQM, and GRSW…AEKV. The short motif at 13 to 24 is the Nuclear export signal element; that stretch reads LQKLQELVDQLY. S203 is subject to Phosphoserine; by ATM. Position 221 is a phosphoserine; by CHEK2 (S221). One copy of the TPR 6 repeat lies at 224–253; it reads PDLHLNRATLHKYEENYGEALEGFSRAAAL. Positions 285-287 are mediates interaction with 28S rRNA of ribosome-coding tubulin; sequence KTK.

In terms of assembly, interacts with JMY and p300/EP300; the interaction occurs in the nucleus and augments the association between JMY and p300/EP300 in response to DNA damage. Interacts with PRMT5; the interaction is DNA damage-dependent and promotes PRMT5 interaction with p53/TP53 and subsequent methylation. Forms a complex with HSF1 and p300/EP300; these interactions augment chromatin-bound HSF1 and p300/EP300 histone acetyltransferase activity, resulting in enhanced heat-shock-responsive transcription. Interacts with JMY; the interaction occurs in the cytoplasm and results in the inhibition of JYM's nucleation activity. Interacts with ribosome-coding tubulin (via 60S subunit 28S rRNA and protein uL24/RPL26) and the N-terminal of nascent tubulin polypeptide (via alpha-tubulin MREC motif and beta-tubulin MREI motif); these interactions result in tubulin mRNA-targeted degradation. Interacts with ATP5F1B; the interaction occurs in the mitochondria and results in ATP production decrease. Interacts with p53/TP53; the interaction occurs in the mitochondria and results in increased apoptosis. Post-translationally, phosphorylation by ATM kinase induces nuclear accumulation while interfering with nuclear export, and phosphorylation by CHEK2 kinase enhances nuclear stability.

Its subcellular location is the nucleus. It localises to the cytoplasm. It is found in the cytoplasmic vesicle. The protein resides in the mitochondrion matrix. Functionally, cofactor involved in the regulation of various cellular mechanisms such as actin regulation, autophagy, chromatin regulation and DNA repair. In physiological conditions, interacts with cofactor JMY in the cytoplasm which prevents JMY's actin nucleation activity and ability to activate the Arp2/3 complex. Acts as a negative regulator of nutrient stress-induced autophagy by inhibiting JMY's interaction with MAP1LC3B, thereby preventing autophagosome formation. Involves in tubulin autoregulation by promoting its degradation in response to excess soluble tubulin. To do so, associates with the active ribosome near the ribosome exit tunnel and with nascent tubulin polypeptides early during their translation, triggering tubulin mRNA-targeted degradation. Following DNA damage, phosphorylated by DNA damage responsive protein kinases ATM and CHEK2, leading to its nuclear accumulation and stability. Nuclear TTC5/STRAP promotes the assembly of a stress-responsive p53/TP53 coactivator complex, which includes the coactivators JMY and p300, thereby increasing p53/TP53-dependent transcription and apoptosis. Also recruits arginine methyltransferase PRMT5 to p53/TP53 when DNA is damaged, allowing PRMT5 to methylate p53/TP53. In DNA stress conditions, also prevents p53/TP53 degradation by E3 ubiquitin ligase MDM2. Upon heat-shock stress, forms a chromatin-associated complex with heat-shock factor 1 HSF1 and p300/EP300 to stimulate heat-shock-responsive transcription, thereby increasing cell survival. Mitochondrial TTC5/STRAP interacts with ATP synthase subunit beta ATP5F1B which decreased ATP synthase activity and lowers mitochondrial ATP production, thereby regulating cellular respiration and mitochondrial-dependent apoptosis. Mitochondrial TTC5/STRAP also regulates p53/TP53-mediated apoptosis. In Bos taurus (Bovine), this protein is Tetratricopeptide repeat protein 5 (TTC5).